Consider the following 188-residue polypeptide: dCTP deaminase (188 aa).

DCTP is bound by residues 111 to 116, 135 to 137, Gln-156, Tyr-170, and Gln-180; these read KSTYAR and TLE. Catalysis depends on Glu-137, which acts as the Proton donor/acceptor.

It belongs to the dCTP deaminase family. In terms of assembly, homotrimer.

The catalysed reaction is dCTP + H2O + H(+) = dUTP + NH4(+). Its pathway is pyrimidine metabolism; dUMP biosynthesis; dUMP from dCTP (dUTP route): step 1/2. Its function is as follows. Catalyzes the deamination of dCTP to dUTP. This Acidovorax sp. (strain JS42) protein is dCTP deaminase.